Consider the following 575-residue polypeptide: Protein NRT1/ PTR FAMILY 5.6 (575 aa).

2 consecutive transmembrane segments (helical) span residues 44 to 64 (AALFIIAIEFSERLSYFGLAT) and 88 to 108 (WSGVTTLMPLLGGFIADAYLG). Position 112 is a phosphothreonine (T112). The next 10 helical transmembrane spans lie at 113–133 (VLVATTIYLMGLVLLTMSWFI), 153–173 (VAFFIAIYLISIGTGGHKPSL), 195–215 (FFNWWNVSLCAGILTAVTAVA), 223–243 (WGVAGIILTVVMAISLIIFFI), 339–359 (LIINVIPIWFSTLAFGICATQ), 375–395 (IGGFTVPPASMFTLTALTLII), 420–440 (ILQRIGTGMIFSLITMIIAAL), 457–477 (VIWLAPQFMVIGFADAFTLVG), 493–513 (LGIAFYLSVIGAASFLNNLLI), and 541–561 (FYWFLAGVIAANICVFVIVAK).

The protein belongs to the major facilitator superfamily. Proton-dependent oligopeptide transporter (POT/PTR) (TC 2.A.17) family. In terms of tissue distribution, expressed in stems, shoots, leaves, flowers and siliques.

It localises to the membrane. The chain is Protein NRT1/ PTR FAMILY 5.6 (NPF5.6) from Arabidopsis thaliana (Mouse-ear cress).